The sequence spans 1969 residues: Myosin-3 (1969 aa).

The region spanning aspartate 33–proline 82 is the Myosin N-terminal SH3-like domain. Residues aspartate 86–aspartate 791 enclose the Myosin motor domain. Lysine 130 carries the N6,N6,N6-trimethyllysine modification. Glycine 179–threonine 186 serves as a coordination point for ATP. Actin-binding regions lie at residues leucine 667 to glutamate 689 and lysine 770 to alanine 784. The IQ domain maps to leucine 794–glycine 823. Positions lysine 857–leucine 1969 form a coiled coil. Disordered stretches follow at residues methionine 942–histidine 966, asparagine 1006–lysine 1029, leucine 1131–valine 1213, and lysine 1234–arginine 1255. Composition is skewed to basic and acidic residues over residues alanine 1137–glutamate 1164 and alanine 1176–asparagine 1197.

This sequence belongs to the TRAFAC class myosin-kinesin ATPase superfamily. Myosin family. Muscle myosin is a hexameric protein that consists of 2 heavy chain subunits (MHC), 2 alkali light chain subunits (MLC) and 2 regulatory light chain subunits (MLC-2). Expressed in body wall muscles, neighboring vulval muscle cells and the contractile sheath covering the hermaphrodite gonad (myoepithelial sheath cells).

The protein resides in the cytoplasm. The protein localises to the myofibril. It localises to the sarcomere. Its subcellular location is the a band. Functionally, essential for muscle contraction. Involved in ovulation likely by regulating the contraction of gonadal myoepithelial sheath cells. This chain is Myosin-3 (myo-3), found in Caenorhabditis elegans.